Reading from the N-terminus, the 128-residue chain is Large ribosomal subunit protein uL22 (128 aa).

Belongs to the universal ribosomal protein uL22 family. Part of the 50S ribosomal subunit.

Functionally, this protein binds specifically to 23S rRNA; its binding is stimulated by other ribosomal proteins, e.g. L4, L17, and L20. It is important during the early stages of 50S assembly. It makes multiple contacts with different domains of the 23S rRNA in the assembled 50S subunit and ribosome. The globular domain of the protein is located near the polypeptide exit tunnel on the outside of the subunit, while an extended beta-hairpin is found that lines the wall of the exit tunnel in the center of the 70S ribosome. The protein is Large ribosomal subunit protein uL22 of Methylobacterium radiotolerans (strain ATCC 27329 / DSM 1819 / JCM 2831 / NBRC 15690 / NCIMB 10815 / 0-1).